The primary structure comprises 121 residues: Small ribosomal subunit protein bS6 (121 aa).

Positions 96–121 (DTGPSSMMKTVEREDARKTQQAEYQA) are disordered. The span at 105–115 (TVEREDARKTQ) shows a compositional bias: basic and acidic residues.

It belongs to the bacterial ribosomal protein bS6 family.

Functionally, binds together with bS18 to 16S ribosomal RNA. This is Small ribosomal subunit protein bS6 from Albidiferax ferrireducens (strain ATCC BAA-621 / DSM 15236 / T118) (Rhodoferax ferrireducens).